The primary structure comprises 223 residues: uncharacterized protein (223 aa).

Positions 40 to 70 (GSKRLKPAKFGTEGKERVEQRTERQRTGSSK) are disordered. Residues 51-70 (TEGKERVEQRTERQRTGSSK) are compositionally biased toward basic and acidic residues.

This is an uncharacterized protein from Homo sapiens (Human).